The following is a 368-amino-acid chain: tRNA-specific 2-thiouridylase MnmA (368 aa).

Residues 11–18 (GMSGGVDS) and methionine 37 contribute to the ATP site. The interaction with target base in tRNA stretch occupies residues 97–99 (NPD). Cysteine 102 (nucleophile) is an active-site residue. Cysteines 102 and 199 form a disulfide. Glycine 127 provides a ligand contact to ATP. Residues 149–151 (KDQ) form an interaction with tRNA region. Residue cysteine 199 is the Cysteine persulfide intermediate of the active site. Positions 311–312 (RY) are interaction with tRNA.

Belongs to the MnmA/TRMU family. In terms of assembly, interacts with TusE.

Its subcellular location is the cytoplasm. It catalyses the reaction S-sulfanyl-L-cysteinyl-[protein] + uridine(34) in tRNA + AH2 + ATP = 2-thiouridine(34) in tRNA + L-cysteinyl-[protein] + A + AMP + diphosphate + H(+). Its function is as follows. Catalyzes the 2-thiolation of uridine at the wobble position (U34) of tRNA(Lys), tRNA(Glu) and tRNA(Gln), leading to the formation of s(2)U34, the first step of tRNA-mnm(5)s(2)U34 synthesis. Sulfur is provided by IscS, via a sulfur-relay system. Binds ATP and its substrate tRNAs. The chain is tRNA-specific 2-thiouridylase MnmA from Shigella flexneri serotype 5b (strain 8401).